Consider the following 512-residue polypeptide: ATP synthase subunit alpha (512 aa).

169–176 (GDRQTGKT) is an ATP binding site.

The protein belongs to the ATPase alpha/beta chains family. In terms of assembly, F-type ATPases have 2 components, CF(1) - the catalytic core - and CF(0) - the membrane proton channel. CF(1) has five subunits: alpha(3), beta(3), gamma(1), delta(1), epsilon(1). CF(0) has three main subunits: a(1), b(2) and c(9-12). The alpha and beta chains form an alternating ring which encloses part of the gamma chain. CF(1) is attached to CF(0) by a central stalk formed by the gamma and epsilon chains, while a peripheral stalk is formed by the delta and b chains.

It localises to the cell inner membrane. The enzyme catalyses ATP + H2O + 4 H(+)(in) = ADP + phosphate + 5 H(+)(out). Functionally, produces ATP from ADP in the presence of a proton gradient across the membrane. The alpha chain is a regulatory subunit. The polypeptide is ATP synthase subunit alpha (Rickettsia akari (strain Hartford)).